A 222-amino-acid polypeptide reads, in one-letter code: Cytidylate kinase (222 aa).

12 to 20 (GPSGAGKGT) is a binding site for ATP.

The protein belongs to the cytidylate kinase family. Type 1 subfamily.

It is found in the cytoplasm. It carries out the reaction CMP + ATP = CDP + ADP. The enzyme catalyses dCMP + ATP = dCDP + ADP. The polypeptide is Cytidylate kinase (Methylococcus capsulatus (strain ATCC 33009 / NCIMB 11132 / Bath)).